The chain runs to 281 residues: CCAAT/enhancer-binding protein epsilon (281 aa).

The disordered stretch occupies residues 1–30 (MSHGTYYECEPRGGQQPLEFSGGRAGPGEL). Lys121 participates in a covalent cross-link: Glycyl lysine isopeptide (Lys-Gly) (interchain with G-Cter in SUMO2). Phosphoserine is present on Ser181. Positions 204-267 (SLEYRLRRER…DTLRNLFRQI (64 aa)) constitute a bZIP domain. Positions 208–228 (RLRRERNNIAVRKSRDKAKRR) are basic motif. A leucine-zipper region spans residues 230–237 (LETQQKVL).

It belongs to the bZIP family. C/EBP subfamily. In terms of assembly, binds DNA as a homodimer and as a heterodimer. Can form stable heterodimers with CEBPA, CEBPB and CEBPD. Interacts with GATA1 and SPI1. Interacts with SMARCD2. In terms of processing, phosphorylated. Strongest expression occurs in promyelocyte and late-myeloblast-like cell lines.

The protein localises to the nucleus. In terms of biological role, transcriptional activator. C/EBP are DNA-binding proteins that recognize two different motifs: the CCAAT homology common to many promoters and the enhanced core homology common to many enhancers. Required for the promyelocyte-myelocyte transition in myeloid differentiation. In Homo sapiens (Human), this protein is CCAAT/enhancer-binding protein epsilon (CEBPE).